We begin with the raw amino-acid sequence, 237 residues long: D-aminoacyl-tRNA deacylase (237 aa).

The protein belongs to the DtdA deacylase family. In terms of assembly, monomer. The cofactor is Zn(2+).

The enzyme catalyses a D-aminoacyl-tRNA + H2O = a tRNA + a D-alpha-amino acid + H(+). It catalyses the reaction glycyl-tRNA(Ala) + H2O = tRNA(Ala) + glycine + H(+). Its function is as follows. D-aminoacyl-tRNA deacylase with broad substrate specificity. By recycling D-aminoacyl-tRNA to D-amino acids and free tRNA molecules, this enzyme counteracts the toxicity associated with the formation of D-aminoacyl-tRNA entities in vivo. In Metallosphaera sedula (strain ATCC 51363 / DSM 5348 / JCM 9185 / NBRC 15509 / TH2), this protein is D-aminoacyl-tRNA deacylase.